We begin with the raw amino-acid sequence, 431 residues long: Enolase (431 aa).

Q163 contacts (2R)-2-phosphoglycerate. E205 acts as the Proton donor in catalysis. D242, E288, and D315 together coordinate Mg(2+). (2R)-2-phosphoglycerate is bound by residues K340, R369, S370, and K391. The Proton acceptor role is filled by K340.

Belongs to the enolase family. Requires Mg(2+) as cofactor.

The protein localises to the cytoplasm. It is found in the secreted. Its subcellular location is the cell surface. The enzyme catalyses (2R)-2-phosphoglycerate = phosphoenolpyruvate + H2O. It participates in carbohydrate degradation; glycolysis; pyruvate from D-glyceraldehyde 3-phosphate: step 4/5. In terms of biological role, catalyzes the reversible conversion of 2-phosphoglycerate (2-PG) into phosphoenolpyruvate (PEP). It is essential for the degradation of carbohydrates via glycolysis. The protein is Enolase of Bacillus cereus (strain G9842).